Here is a 254-residue protein sequence, read N- to C-terminus: Dihydroorotate dehydrogenase B (NAD(+)), electron transfer subunit (254 aa).

The region spanning 1 to 99 (MLQTEMKVIQ…LGPLGKGFDL (99 aa)) is the FAD-binding FR-type domain. FAD is bound by residues 50-53 (RPIS), 67-69 (LYR), and 74-75 (GT). Residues Cys218, Cys223, Cys226, and Cys241 each coordinate [2Fe-2S] cluster.

It belongs to the PyrK family. As to quaternary structure, heterotetramer of 2 PyrK and 2 PyrD type B subunits. The cofactor is [2Fe-2S] cluster. FAD is required as a cofactor.

It functions in the pathway pyrimidine metabolism; UMP biosynthesis via de novo pathway; orotate from (S)-dihydroorotate (NAD(+) route): step 1/1. Responsible for channeling the electrons from the oxidation of dihydroorotate from the FMN redox center in the PyrD type B subunit to the ultimate electron acceptor NAD(+). This chain is Dihydroorotate dehydrogenase B (NAD(+)), electron transfer subunit, found in Listeria innocua serovar 6a (strain ATCC BAA-680 / CLIP 11262).